A 166-amino-acid chain; its full sequence is Large ribosomal subunit protein uL10 (166 aa).

This sequence belongs to the universal ribosomal protein uL10 family. As to quaternary structure, part of the ribosomal stalk of the 50S ribosomal subunit. The N-terminus interacts with L11 and the large rRNA to form the base of the stalk. The C-terminus forms an elongated spine to which L12 dimers bind in a sequential fashion forming a multimeric L10(L12)X complex.

Forms part of the ribosomal stalk, playing a central role in the interaction of the ribosome with GTP-bound translation factors. In Pseudomonas fluorescens (strain ATCC BAA-477 / NRRL B-23932 / Pf-5), this protein is Large ribosomal subunit protein uL10.